The sequence spans 447 residues: Signal recognition particle 54 kDa protein (447 aa).

Residues G103–T110, D185–R189, and T245–D248 contribute to the GTP site.

The protein belongs to the GTP-binding SRP family. SRP54 subfamily. Part of the signal recognition particle protein translocation system, which is composed of SRP and FtsY. Archaeal SRP consists of a 7S RNA molecule of 300 nucleotides and two protein subunits: SRP54 and SRP19.

It is found in the cytoplasm. The catalysed reaction is GTP + H2O = GDP + phosphate + H(+). In terms of biological role, involved in targeting and insertion of nascent membrane proteins into the cytoplasmic membrane. Binds to the hydrophobic signal sequence of the ribosome-nascent chain (RNC) as it emerges from the ribosomes. The SRP-RNC complex is then targeted to the cytoplasmic membrane where it interacts with the SRP receptor FtsY. The sequence is that of Signal recognition particle 54 kDa protein from Saccharolobus islandicus (strain Y.N.15.51 / Yellowstone #2) (Sulfolobus islandicus).